A 375-amino-acid chain; its full sequence is Carbamoyl phosphate synthase small chain (375 aa).

The tract at residues 1 to 184 (MVSLYLENGL…LDYKPFDEKI (184 aa)) is CPSase. Residues Ser-44, Gly-240, and Gly-242 each contribute to the L-glutamine site. Residues 188–375 (IIAVLDFGAK…KEFVGLLEGF (188 aa)) enclose the Glutamine amidotransferase type-1 domain. The active-site Nucleophile is Cys-268. Residues Leu-269, Gln-272, Asn-310, and Tyr-313 each coordinate L-glutamine. Active-site residues include His-351 and Glu-353.

The protein belongs to the CarA family. In terms of assembly, composed of two chains; the small (or glutamine) chain promotes the hydrolysis of glutamine to ammonia, which is used by the large (or ammonia) chain to synthesize carbamoyl phosphate. Tetramer of heterodimers (alpha,beta)4.

It carries out the reaction hydrogencarbonate + L-glutamine + 2 ATP + H2O = carbamoyl phosphate + L-glutamate + 2 ADP + phosphate + 2 H(+). The catalysed reaction is L-glutamine + H2O = L-glutamate + NH4(+). It participates in amino-acid biosynthesis; L-arginine biosynthesis; carbamoyl phosphate from bicarbonate: step 1/1. It functions in the pathway pyrimidine metabolism; UMP biosynthesis via de novo pathway; (S)-dihydroorotate from bicarbonate: step 1/3. In terms of biological role, small subunit of the glutamine-dependent carbamoyl phosphate synthetase (CPSase). CPSase catalyzes the formation of carbamoyl phosphate from the ammonia moiety of glutamine, carbonate, and phosphate donated by ATP, constituting the first step of 2 biosynthetic pathways, one leading to arginine and/or urea and the other to pyrimidine nucleotides. The small subunit (glutamine amidotransferase) binds and cleaves glutamine to supply the large subunit with the substrate ammonia. The protein is Carbamoyl phosphate synthase small chain of Helicobacter pylori (strain J99 / ATCC 700824) (Campylobacter pylori J99).